We begin with the raw amino-acid sequence, 181 residues long: Der GTPase-activating protein YihI (181 aa).

A disordered region spans residues 1–73 (MSRIKKARKP…DPRIGSKKPI (73 aa)). A compositionally biased stretch (basic and acidic residues) spans 22 to 32 (NRTDRDVESRE). Residues 33-42 (LKRKRKRKGL) show a composition bias toward basic residues. Over residues 55–67 (QARRNAQKKDPRI) the composition is skewed to basic and acidic residues.

This sequence belongs to the YihI family. Interacts with Der.

Functionally, a GTPase-activating protein (GAP) that modifies Der/EngA GTPase function. May play a role in ribosome biogenesis. This Aliivibrio fischeri (strain MJ11) (Vibrio fischeri) protein is Der GTPase-activating protein YihI.